A 72-amino-acid chain; its full sequence is Sec-independent protein translocase protein TatA (72 aa).

A helical transmembrane segment spans residues 1–21; it reads MGSFSIWHWLIVLAVVLLLFG. Positions 43–72 are disordered; the sequence is MADEDAKEDPRTIDAKAEEPVKDVKKTTKS. The segment covering 50 to 72 has biased composition (basic and acidic residues); that stretch reads EDPRTIDAKAEEPVKDVKKTTKS.

Belongs to the TatA/E family. The Tat system comprises two distinct complexes: a TatABC complex, containing multiple copies of TatA, TatB and TatC subunits, and a separate TatA complex, containing only TatA subunits. Substrates initially bind to the TatABC complex, which probably triggers association of the separate TatA complex to form the active translocon.

It localises to the cell inner membrane. Functionally, part of the twin-arginine translocation (Tat) system that transports large folded proteins containing a characteristic twin-arginine motif in their signal peptide across membranes. TatA could form the protein-conducting channel of the Tat system. The polypeptide is Sec-independent protein translocase protein TatA (Brucella suis biovar 1 (strain 1330)).